We begin with the raw amino-acid sequence, 116 residues long: Putative pterin-4-alpha-carbinolamine dehydratase (116 aa).

This sequence belongs to the pterin-4-alpha-carbinolamine dehydratase family.

It carries out the reaction (4aS,6R)-4a-hydroxy-L-erythro-5,6,7,8-tetrahydrobiopterin = (6R)-L-erythro-6,7-dihydrobiopterin + H2O. The chain is Putative pterin-4-alpha-carbinolamine dehydratase from Stenotrophomonas maltophilia (strain R551-3).